The following is a 645-amino-acid chain: MTPPLIELEGIRRSYRSGDVVTHALRGVGLSIHAGEFVAIIGASGSGKSTLMNIIGLMDRPSDGAYRFGGRDVATLNRDELAALRRGCFGFIFQNYHLIPTVSALGNVEMPAIHAGAPRAYRHRRATALLTRLGLANRITNRPSQLSGGQQQRVSIARALMNGGAVILADEPTGALDSKSGTEVLGILKKLAGDGHTVILITHDSKVAAAAERIIRIEDGLIVSDSGPDPEKVSSSIAVVPWQASDSSPPLWTWLEEAARSAFAALAINPVRTALTLSGIVIGVASVVAMMAIGRGAQASYIERASAIGTNWIVVDRAGESTGNSLPLTPADAQAIKDMDNVSGSMPAMWDMATMRRGNIDLNTDVVATTAEFRTVHNWDMAKGTFFTKQDEVSGGPVVLLGATLASKLFPGIADPSGSNILINNLPFLVTGVLESKGLSERGTDRDKRAVMPLRTATMRLFGKDDLSEIVVSIADMSRLHETKEAIKALLIRRHGREDFYIYDSASAFQKAEDERRSSNLLLSAIAAISMLVGGIGIMNIMLITVSERTREIGVRTAIGARTADILGQFLTEAVVLAAIGGVVGLLLGAVIGVGAALLFGMTVIFSVTMALGALMGAVVMGTVFGFMPAYRAARLKPIEALARG.

Residues 6–244 (IELEGIRRSY…SSIAVVPWQA (239 aa)) form the ABC transporter domain. 42-49 (GASGSGKS) serves as a coordination point for ATP. Transmembrane regions (helical) follow at residues 274–294 (ALTL…MAIG), 526–546 (IAAI…LITV), 574–594 (AVVL…VIGV), and 596–616 (AALL…GALM).

The protein belongs to the ABC transporter superfamily. Macrolide exporter (TC 3.A.1.122) family. Homodimer.

The protein resides in the cell inner membrane. Non-canonical ABC transporter that contains transmembrane domains (TMD), which form a pore in the inner membrane, and an ATP-binding domain (NBD), which is responsible for energy generation. Confers resistance against macrolides. The polypeptide is Macrolide export ATP-binding/permease protein MacB (Nitrobacter winogradskyi (strain ATCC 25391 / DSM 10237 / CIP 104748 / NCIMB 11846 / Nb-255)).